Here is a 126-residue protein sequence, read N- to C-terminus: MAITKEEVISFIENMSVLELANLVKELEEKFGVSAAAPVAVAAAGPAAGPAESAEEKTEFDVILKAAGANKIAVIKVVRGLTSLGLKEAKDLVDGAPQPVKTGISKEEAADAQKQLVEAGAEVEVK.

This sequence belongs to the bacterial ribosomal protein bL12 family. Homodimer. Part of the ribosomal stalk of the 50S ribosomal subunit. Forms a multimeric L10(L12)X complex, where L10 forms an elongated spine to which 2 to 4 L12 dimers bind in a sequential fashion. Binds GTP-bound translation factors.

In terms of biological role, forms part of the ribosomal stalk which helps the ribosome interact with GTP-bound translation factors. Is thus essential for accurate translation. The protein is Large ribosomal subunit protein bL12 of Citrifermentans bemidjiense (strain ATCC BAA-1014 / DSM 16622 / JCM 12645 / Bem) (Geobacter bemidjiensis).